The sequence spans 132 residues: Small ribosomal subunit protein uS8 (132 aa).

The protein belongs to the universal ribosomal protein uS8 family. Part of the 30S ribosomal subunit. Contacts proteins S5 and S12.

Its function is as follows. One of the primary rRNA binding proteins, it binds directly to 16S rRNA central domain where it helps coordinate assembly of the platform of the 30S subunit. The protein is Small ribosomal subunit protein uS8 of Staphylococcus carnosus (strain TM300).